The primary structure comprises 152 residues: Putative superoxide dismutase [Cu-Zn] (152 aa).

Residues histidine 43, histidine 45, and histidine 60 each coordinate Cu cation. Cysteine 54 and cysteine 144 form a disulfide bridge. Histidine 60, histidine 68, histidine 77, and aspartate 80 together coordinate Zn(2+). A Cu cation-binding site is contributed by histidine 118.

It belongs to the Cu-Zn superoxide dismutase family. It depends on Cu cation as a cofactor. Zn(2+) is required as a cofactor.

The enzyme catalyses 2 superoxide + 2 H(+) = H2O2 + O2. Destroys radicals which are normally produced within the cells and which are toxic to biological systems. This is Putative superoxide dismutase [Cu-Zn] (SOD) from Orgyia pseudotsugata (Douglas-fir tussock moth).